We begin with the raw amino-acid sequence, 165 residues long: 2-C-methyl-D-erythritol 2,4-cyclodiphosphate synthase (165 aa).

A divalent metal cation-binding residues include Asp12 and His14. 4-CDP-2-C-methyl-D-erythritol 2-phosphate is bound by residues 12-14 (DIH) and 38-39 (HS). His46 contributes to the a divalent metal cation binding site. 4-CDP-2-C-methyl-D-erythritol 2-phosphate is bound by residues 60-62 (DIG), 136-139 (TTNE), and Arg146.

This sequence belongs to the IspF family. In terms of assembly, homotrimer. A divalent metal cation is required as a cofactor.

The catalysed reaction is 4-CDP-2-C-methyl-D-erythritol 2-phosphate = 2-C-methyl-D-erythritol 2,4-cyclic diphosphate + CMP. The protein operates within isoprenoid biosynthesis; isopentenyl diphosphate biosynthesis via DXP pathway; isopentenyl diphosphate from 1-deoxy-D-xylulose 5-phosphate: step 4/6. Involved in the biosynthesis of isopentenyl diphosphate (IPP) and dimethylallyl diphosphate (DMAPP), two major building blocks of isoprenoid compounds. Catalyzes the conversion of 4-diphosphocytidyl-2-C-methyl-D-erythritol 2-phosphate (CDP-ME2P) to 2-C-methyl-D-erythritol 2,4-cyclodiphosphate (ME-CPP) with a corresponding release of cytidine 5-monophosphate (CMP). The polypeptide is 2-C-methyl-D-erythritol 2,4-cyclodiphosphate synthase (Nostoc sp. (strain PCC 7120 / SAG 25.82 / UTEX 2576)).